Consider the following 443-residue polypeptide: Methyl-coenzyme M reductase subunit beta (443 aa).

Coenzyme M is bound at residue Tyr-367. Gly-369 contacts coenzyme B.

The protein belongs to the methyl-coenzyme M reductase beta subunit family. In terms of assembly, MCR is a hexamer of two alpha, two beta, and two gamma chains, forming a dimer of heterotrimers. Coenzyme F430 serves as cofactor.

It is found in the cytoplasm. The enzyme catalyses coenzyme B + methyl-coenzyme M = methane + coenzyme M-coenzyme B heterodisulfide. It functions in the pathway one-carbon metabolism; methyl-coenzyme M reduction; methane from methyl-coenzyme M: step 1/1. In terms of biological role, component of the methyl-coenzyme M reductase (MCR) I that catalyzes the reductive cleavage of methyl-coenzyme M (CoM-S-CH3 or 2-(methylthio)ethanesulfonate) using coenzyme B (CoB or 7-mercaptoheptanoylthreonine phosphate) as reductant which results in the production of methane and the mixed heterodisulfide of CoB and CoM (CoM-S-S-CoB). This is the final step in methanogenesis. The protein is Methyl-coenzyme M reductase subunit beta (mcrB) of Methanococcus vannielii.